The sequence spans 303 residues: tRNA (guanine-N(7)-)-methyltransferase (303 aa).

Residues 1-64 (MPKPHQVQVI…STSDKISLPR (64 aa)) are disordered. Residues 10-38 (IKDRETQLREQQEAESKRRTYRDVKEETR) show a composition bias toward basic and acidic residues. Residues G118, 141-142 (EI), 177-178 (NA), and C197 contribute to the S-adenosyl-L-methionine site. D200 is a catalytic residue. 275 to 277 (TEE) lines the S-adenosyl-L-methionine pocket.

This sequence belongs to the class I-like SAM-binding methyltransferase superfamily. TrmB family. In terms of assembly, forms a complex with TRM82.

Its subcellular location is the nucleus. The catalysed reaction is guanosine(46) in tRNA + S-adenosyl-L-methionine = N(7)-methylguanosine(46) in tRNA + S-adenosyl-L-homocysteine. It functions in the pathway tRNA modification; N(7)-methylguanine-tRNA biosynthesis. Catalyzes the formation of N(7)-methylguanine at position 46 (m7G46) in tRNA. The protein is tRNA (guanine-N(7)-)-methyltransferase of Scheffersomyces stipitis (strain ATCC 58785 / CBS 6054 / NBRC 10063 / NRRL Y-11545) (Yeast).